A 437-amino-acid chain; its full sequence is Glucose-1-phosphate adenylyltransferase (437 aa).

Residues Tyr113, Gly179, 194–195 (EK), and Ser212 contribute to the alpha-D-glucose 1-phosphate site.

The protein belongs to the bacterial/plant glucose-1-phosphate adenylyltransferase family. As to quaternary structure, homotetramer.

The enzyme catalyses alpha-D-glucose 1-phosphate + ATP + H(+) = ADP-alpha-D-glucose + diphosphate. It functions in the pathway glycan biosynthesis; glycogen biosynthesis. Involved in the biosynthesis of ADP-glucose, a building block required for the elongation reactions to produce glycogen. Catalyzes the reaction between ATP and alpha-D-glucose 1-phosphate (G1P) to produce pyrophosphate and ADP-Glc. This is Glucose-1-phosphate adenylyltransferase from Haemophilus influenzae (strain ATCC 51907 / DSM 11121 / KW20 / Rd).